The primary structure comprises 498 residues: ATP synthase subunit beta, chloroplastic (498 aa).

An ATP-binding site is contributed by 172-179 (GGAGVGKT).

This sequence belongs to the ATPase alpha/beta chains family. In terms of assembly, F-type ATPases have 2 components, CF(1) - the catalytic core - and CF(0) - the membrane proton channel. CF(1) has five subunits: alpha(3), beta(3), gamma(1), delta(1), epsilon(1). CF(0) has four main subunits: a(1), b(1), b'(1) and c(9-12).

The protein resides in the plastid. It is found in the chloroplast thylakoid membrane. It catalyses the reaction ATP + H2O + 4 H(+)(in) = ADP + phosphate + 5 H(+)(out). Its function is as follows. Produces ATP from ADP in the presence of a proton gradient across the membrane. The catalytic sites are hosted primarily by the beta subunits. This is ATP synthase subunit beta, chloroplastic from Calycanthus floridus (Eastern sweetshrub).